Consider the following 364-residue polypeptide: Peptide chain release factor 1 (364 aa).

Glutamine 232 carries the N5-methylglutamine modification.

It belongs to the prokaryotic/mitochondrial release factor family. In terms of processing, methylated by PrmC. Methylation increases the termination efficiency of RF1.

The protein resides in the cytoplasm. In terms of biological role, peptide chain release factor 1 directs the termination of translation in response to the peptide chain termination codons UAG and UAA. In Sorangium cellulosum (strain So ce56) (Polyangium cellulosum (strain So ce56)), this protein is Peptide chain release factor 1.